We begin with the raw amino-acid sequence, 860 residues long: Eukaryotic translation initiation factor 3 subunit C (860 aa).

The disordered stretch occupies residues 1–79 (MSSRFFHGGS…ESDEEEDRVT (79 aa)). 2 stretches are compositionally biased toward acidic residues: residues 16–53 (SSDE…DDEA) and 67–76 (DLDESDEEED). In terms of domain architecture, PCI spans 598 to 772 (FHMHINLELL…NAIVFRKGVE (175 aa)). The segment at 808–860 (AFQRDQGPGGRLGRGQGRGGQRTAGGRPPIGGQQRRPGGQQFSGGALGGAIKA) is disordered. The segment covering 814–830 (GPGGRLGRGQGRGGQRT) has biased composition (gly residues). Low complexity predominate over residues 831–847 (AGGRPPIGGQQRRPGGQ). Residues 848–860 (QFSGGALGGAIKA) are compositionally biased toward gly residues.

This sequence belongs to the eIF-3 subunit C family. As to quaternary structure, component of the eukaryotic translation initiation factor 3 (eIF-3) complex.

The protein resides in the cytoplasm. In terms of biological role, component of the eukaryotic translation initiation factor 3 (eIF-3) complex, which is involved in protein synthesis of a specialized repertoire of mRNAs and, together with other initiation factors, stimulates binding of mRNA and methionyl-tRNAi to the 40S ribosome. The eIF-3 complex specifically targets and initiates translation of a subset of mRNAs involved in cell proliferation. This Coccidioides immitis (strain RS) (Valley fever fungus) protein is Eukaryotic translation initiation factor 3 subunit C.